The sequence spans 304 residues: Dermonecrotic toxin LiSicTox-betaIA1ii (304 aa).

The first 21 residues, 1 to 21, serve as a signal peptide directing secretion; that stretch reads MLLCAVISFIVYAVFLQEANG. The propeptide occupies 22–26; sequence HAAER. Residue H38 is part of the active site. The Mg(2+) site is built by E58 and D60. The active-site Nucleophile is the H74. Cystine bridges form between C78–C84 and C80–C223. D118 serves as a coordination point for Mg(2+).

The protein belongs to the arthropod phospholipase D family. Class II subfamily. Requires Mg(2+) as cofactor. In terms of tissue distribution, expressed by the venom gland.

It is found in the secreted. It carries out the reaction an N-(acyl)-sphingosylphosphocholine = an N-(acyl)-sphingosyl-1,3-cyclic phosphate + choline. The catalysed reaction is an N-(acyl)-sphingosylphosphoethanolamine = an N-(acyl)-sphingosyl-1,3-cyclic phosphate + ethanolamine. The enzyme catalyses a 1-acyl-sn-glycero-3-phosphocholine = a 1-acyl-sn-glycero-2,3-cyclic phosphate + choline. It catalyses the reaction a 1-acyl-sn-glycero-3-phosphoethanolamine = a 1-acyl-sn-glycero-2,3-cyclic phosphate + ethanolamine. In terms of biological role, dermonecrotic toxins cleave the phosphodiester linkage between the phosphate and headgroup of certain phospholipids (sphingolipid and lysolipid substrates), forming an alcohol (often choline) and a cyclic phosphate. This toxin acts on sphingomyelin (SM) with low activity. It may also act on ceramide phosphoethanolamine (CPE), lysophosphatidylcholine (LPC) and lysophosphatidylethanolamine (LPE), but not on lysophosphatidylserine (LPS), and lysophosphatidylglycerol (LPG). It acts by transphosphatidylation, releasing exclusively cyclic phosphate products as second products. Induces dermonecrosis, hemolysis, increased vascular permeability, edema, inflammatory response, and platelet aggregation. The protein is Dermonecrotic toxin LiSicTox-betaIA1ii of Loxosceles intermedia (Brown spider).